Reading from the N-terminus, the 598-residue chain is Protein HIGH CHLOROPHYLL FLUORESCENCE PHENOTYPE 173, chloroplastic (598 aa).

Residues 1–79 (MVGSIVGSNM…ITTKESEETV (79 aa)) constitute a chloroplast transit peptide. A disordered region spans residues 42-106 (VIPRAQSSSS…PTLKLDDVNP (65 aa)). The segment covering 73–84 (KESEETVAKKLD) has biased composition (basic and acidic residues). Pro residues predominate over residues 87 to 97 (PPSPQSPPSPP).

This sequence belongs to the NmrA-type oxidoreductase family. Component of a high molecular weight complex containing psbA mRNA, OHP1, OHP2 and HCF244, and PSII core proteins D1/D2, HCF136 and HCF173. Interacts with LPE1.

Its subcellular location is the plastid. It is found in the chloroplast membrane. It localises to the chloroplast thylakoid membrane. The protein localises to the chloroplast stroma. Functionally, auxiliary factor required, together with HCF244, for the biogenesis of photosystem II (PSII), especially for the synthesis of the reaction center proteins (e.g. D1), via the regulation of the corresponding mRNA (e.g. psbA) translation initiation (ribosomal loading) and stabilization. In Arabidopsis thaliana (Mouse-ear cress), this protein is Protein HIGH CHLOROPHYLL FLUORESCENCE PHENOTYPE 173, chloroplastic.